Here is a 133-residue protein sequence, read N- to C-terminus: Putative N-acetylgalactosamine permease IIC component 2 (133 aa).

Residues 1-2 (ME) lie on the Cytoplasmic side of the membrane. The region spanning 1–133 (MEISLLQAFA…CDLATNPRRI (133 aa)) is the PTS EIIC type-4 domain. Residues 3–23 (ISLLQAFALGIIAFIAGLDMF) traverse the membrane as a helical segment. Topologically, residues 24–32 (NGLTHMHRP) are periplasmic. Residues 33–53 (VVLGPLVGLVLGDLHTGILTG) form a helical membrane-spanning segment. At 54-65 (GTLELVWMGLAP) the chain is on the cytoplasmic side. A helical membrane pass occupies residues 66–86 (LAGAQPPNVIIGTIVGTAFAI). Topologically, residues 87–93 (TTGVKPD) are periplasmic. Residues 94–114 (VAVGVAVPFAVAVQMGITFLF) traverse the membrane as a helical segment. Topologically, residues 115–133 (SVMSGVMSRCDLATNPRRI) are cytoplasmic.

It is found in the cell inner membrane. Its function is as follows. The phosphoenolpyruvate-dependent sugar phosphotransferase system (PTS), a major carbohydrate active -transport system, catalyzes the phosphorylation of incoming sugar substrates concomitant with their translocation across the cell membrane. This system is involved in N-acetylgalactosamine transport. The chain is Putative N-acetylgalactosamine permease IIC component 2 (agaW) from Escherichia coli (strain K12).